The primary structure comprises 217 residues: Probable transaldolase (217 aa).

The active-site Schiff-base intermediate with substrate is Lys83.

Belongs to the transaldolase family. Type 3B subfamily.

It is found in the cytoplasm. The catalysed reaction is D-sedoheptulose 7-phosphate + D-glyceraldehyde 3-phosphate = D-erythrose 4-phosphate + beta-D-fructose 6-phosphate. Its pathway is carbohydrate degradation; pentose phosphate pathway; D-glyceraldehyde 3-phosphate and beta-D-fructose 6-phosphate from D-ribose 5-phosphate and D-xylulose 5-phosphate (non-oxidative stage): step 2/3. Its function is as follows. Transaldolase is important for the balance of metabolites in the pentose-phosphate pathway. This Anaeromyxobacter dehalogenans (strain 2CP-C) protein is Probable transaldolase.